The chain runs to 248 residues: Aliphatic sulfonates import ATP-binding protein SsuB 2 (248 aa).

One can recognise an ABC transporter domain in the interval 14 to 230 (VRVESLVRSF…DHGHRRFGEI (217 aa)). An ATP-binding site is contributed by 46–53 (GRSGSGKS).

Belongs to the ABC transporter superfamily. Aliphatic sulfonates importer (TC 3.A.1.17.2) family. The complex is composed of two ATP-binding proteins (SsuB), two transmembrane proteins (SsuC) and a solute-binding protein (SsuA).

The protein localises to the cell inner membrane. It carries out the reaction ATP + H2O + aliphatic sulfonate-[sulfonate-binding protein]Side 1 = ADP + phosphate + aliphatic sulfonateSide 2 + [sulfonate-binding protein]Side 1.. Its function is as follows. Part of the ABC transporter complex SsuABC involved in aliphatic sulfonates import. Responsible for energy coupling to the transport system. This chain is Aliphatic sulfonates import ATP-binding protein SsuB 2, found in Mesorhizobium japonicum (strain LMG 29417 / CECT 9101 / MAFF 303099) (Mesorhizobium loti (strain MAFF 303099)).